Here is a 159-residue protein sequence, read N- to C-terminus: MNFLVVIVTTVSLAGAASAGEIQNLYQFGKMVMCLGNLNVLEGLEYNGYGCYCGRGGKGTPLDDTDRCCKQHDECYERATDEMGCWSIETYATTYDYTKSKVSGKCTIKCKLESDYSRFTIRKKCKAFICECDRIGAQCFADKRSTFNRSLISYTKDKC.

Positions 1–19 (MNFLVVIVTTVSLAGAASA) are cleaved as a signal peptide. A propeptide spanning residues 20-23 (GEIQ) is cleaved from the precursor. 6 disulfide bridges follow: Cys-51/Cys-159, Cys-53/Cys-69, Cys-68/Cys-139, Cys-75/Cys-132, Cys-85/Cys-125, and Cys-110/Cys-130. Ca(2+)-binding residues include Tyr-52, Gly-54, and Gly-56. His-72 is an active-site residue. Asp-73 serves as a coordination point for Ca(2+). Asp-133 is an active-site residue.

Belongs to the phospholipase A2 family. Group I subfamily. In terms of assembly, homodimer. Requires Ca(2+) as cofactor. As to expression, expressed by the venom gland.

It is found in the secreted. It catalyses the reaction a 1,2-diacyl-sn-glycero-3-phosphocholine + H2O = a 1-acyl-sn-glycero-3-phosphocholine + a fatty acid + H(+). In terms of biological role, starfish phospholipase A2 (PLA2) that has hemorrhagic and capillary permeability-increasing activities and hence is considered to be deeply involved in the local inflammation. Shows hemolytic activity only in the presence of phosphatidylcholine (PC). PLA2 catalyzes the calcium-dependent hydrolysis of the 2-acyl groups in 3-sn-phosphoglycerides. This chain is Phospholipase A2 AP-PLA2-I, found in Acanthaster planci (Crown-of-thorns starfish).